The following is a 576-amino-acid chain: Eukaryotic translation initiation factor 3 subunit L (576 aa).

Positions aspartate 330–arginine 536 constitute a PCI domain.

This sequence belongs to the eIF-3 subunit L family. In terms of assembly, component of the eukaryotic translation initiation factor 3 (eIF-3) complex, which is composed of 13 subunits: eif3a, eif3b, eif3c, eif3d, eif3e, eif3f, eif3g, eif3h, eif3i, eif3j, eif3k, eif3l and eif3m.

It is found in the cytoplasm. Its function is as follows. Component of the eukaryotic translation initiation factor 3 (eIF-3) complex, which is involved in protein synthesis of a specialized repertoire of mRNAs and, together with other initiation factors, stimulates binding of mRNA and methionyl-tRNAi to the 40S ribosome. The eIF-3 complex specifically targets and initiates translation of a subset of mRNAs involved in cell proliferation. This is Eukaryotic translation initiation factor 3 subunit L (eif3l) from Danio rerio (Zebrafish).